We begin with the raw amino-acid sequence, 29 residues long: Galanin (29 aa).

A29 is subject to Alanine amide.

Belongs to the galanin family.

Its subcellular location is the secreted. Its function is as follows. Contracts smooth muscle of the gastrointestinal and genitourinary tract, regulates growth hormone release, modulates insulin release, and may be involved in the control of adrenal secretion. The chain is Galanin (GAL) from Alligator mississippiensis (American alligator).